A 172-amino-acid polypeptide reads, in one-letter code: WW domain binding protein VOPP1 (172 aa).

The N-terminal stretch at Met-1 to Ala-22 is a signal peptide. Residues Lys-23–Leu-60 lie on the Extracellular side of the membrane. Residues Trp-61–Ile-81 form a helical membrane-spanning segment. Residues Arg-82 to Lys-172 lie on the Cytoplasmic side of the membrane. The disordered stretch occupies residues Gln-139–Lys-172. Residues Tyr-151 to Tyr-165 show a composition bias toward pro residues.

It belongs to the VOPP1/ECOP family. In terms of assembly, interacts with WWOX (via WW domain).

The protein localises to the cytoplasmic vesicle membrane. Its subcellular location is the late endosome membrane. It is found in the lysosome membrane. In terms of biological role, increases the transcriptional activity of NFKB1 by facilitating its nuclear translocation, DNA-binding and associated apoptotic response, when overexpressed. May sequester WWOX in lysosomal vesicles and thereby regulate WWOX role as tumor suppressor. This is WW domain binding protein VOPP1 (Vopp1) from Mus musculus (Mouse).